The chain runs to 299 residues: Kruppel-like factor 2 (299 aa).

Disordered regions lie at residues 19 to 38 (YQNAHHQHHQQHYHQQSHHH) and 146 to 189 (YSFS…RRDK). The segment covering 23–38 (HHQHHQQHYHQQSHHH) has biased composition (basic residues). Residues 153–180 (SGKDEEDPRIPLKDRGRVYHPQSTEKPK) are compositionally biased toward basic and acidic residues. 3 C2H2-type zinc fingers span residues 198–222 (HKCFYQGCGKVYTKSSHLTAHERVH), 228–252 (YPCEWPGCSWRFARSDELTRHYRKH), and 258–280 (FACKECSRKFSRSDHLQLHMKRH).

The protein belongs to the krueppel C2H2-type zinc-finger protein family. As to expression, expressed predominantly in intestine.

The protein localises to the nucleus. Its function is as follows. Probable transcription factor which regulates lipid metabolism. This chain is Kruppel-like factor 2, found in Caenorhabditis elegans.